A 418-amino-acid chain; its full sequence is Probable serine hydroxymethyltransferase (418 aa).

Residues leucine 118 and 122-124 (GHL) contribute to the (6S)-5,6,7,8-tetrahydrofolate site. N6-(pyridoxal phosphate)lysine is present on lysine 226. 351 to 353 (SPF) is a binding site for (6S)-5,6,7,8-tetrahydrofolate.

This sequence belongs to the SHMT family. In terms of assembly, homodimer. Pyridoxal 5'-phosphate is required as a cofactor.

It is found in the cytoplasm. The catalysed reaction is (6R)-5,10-methylene-5,6,7,8-tetrahydrofolate + glycine + H2O = (6S)-5,6,7,8-tetrahydrofolate + L-serine. It participates in one-carbon metabolism; tetrahydrofolate interconversion. Functionally, catalyzes the reversible interconversion of serine and glycine with tetrahydrofolate (THF) serving as the one-carbon carrier. This reaction serves as the major source of one-carbon groups required for the biosynthesis of purines, thymidylate, methionine, and other important biomolecules. In Mesomycoplasma hyopneumoniae (strain J / ATCC 25934 / NCTC 10110) (Mycoplasma hyopneumoniae), this protein is Probable serine hydroxymethyltransferase.